The following is a 63-amino-acid chain: MVFQLICSTCGRDISEERYYLLIKELSLKKVLEGVKNNCCRLKLSTQIEPQRNLTVQPLIDIN.

It belongs to the poxviridae DNA-directed RNA polymerase 7 kDa subunit family. As to quaternary structure, the DNA-dependent RNA polymerase used for intermediate and late genes expression consists of eight subunits 147 kDa, 133 kDa, 35 kDa, 30 kDa, 22 kDa, 19 kDa, 18 kDa and 7 kDa totalling more than 500 kDa in mass. The same holoenzyme, with the addition of the transcription-specificity factor RAP94, is used for early gene expression.

The protein localises to the virion. It carries out the reaction RNA(n) + a ribonucleoside 5'-triphosphate = RNA(n+1) + diphosphate. In terms of biological role, part of the DNA-dependent RNA polymerase which catalyzes the transcription of viral DNA into RNA using the four ribonucleoside triphosphates as substrates. Responsible for the transcription of early, intermediate and late genes. DNA-dependent RNA polymerase associates with the early transcription factor (ETF) thereby allowing the early genes transcription. Late transcription, and probably also intermediate transcription, require newly synthesized RNA polymerase. The chain is DNA-directed RNA polymerase 7 kDa subunit (RPO7) from Homo sapiens (Human).